A 423-amino-acid polypeptide reads, in one-letter code: Deoxyguanosinetriphosphate triphosphohydrolase-like protein (423 aa).

An HD domain is found at 66–216; that stretch reads RLTHSLEVAQ…MDFSDDIAYS (151 aa).

It belongs to the dGTPase family. Type 2 subfamily.

The polypeptide is Deoxyguanosinetriphosphate triphosphohydrolase-like protein (Corynebacterium diphtheriae (strain ATCC 700971 / NCTC 13129 / Biotype gravis)).